Consider the following 424-residue polypeptide: 3-isopropylmalate dehydratase large subunit 1 (424 aa).

Residues Cys303, Cys363, and Cys366 each contribute to the [4Fe-4S] cluster site.

The protein belongs to the aconitase/IPM isomerase family. LeuC type 2 subfamily. In terms of assembly, heterodimer of LeuC and LeuD. [4Fe-4S] cluster serves as cofactor.

The enzyme catalyses (2R,3S)-3-isopropylmalate = (2S)-2-isopropylmalate. It functions in the pathway amino-acid biosynthesis; L-leucine biosynthesis; L-leucine from 3-methyl-2-oxobutanoate: step 2/4. Functionally, catalyzes the isomerization between 2-isopropylmalate and 3-isopropylmalate, via the formation of 2-isopropylmaleate. The polypeptide is 3-isopropylmalate dehydratase large subunit 1 (Pyrococcus furiosus (strain ATCC 43587 / DSM 3638 / JCM 8422 / Vc1)).